The sequence spans 156 residues: Small ribosomal subunit protein uS7c (156 aa).

Belongs to the universal ribosomal protein uS7 family. In terms of assembly, part of the 30S ribosomal subunit.

The protein localises to the plastid. The protein resides in the chloroplast. One of the primary rRNA binding proteins, it binds directly to 16S rRNA where it nucleates assembly of the head domain of the 30S subunit. This is Small ribosomal subunit protein uS7c (rps7) from Thalassiosira pseudonana (Marine diatom).